The primary structure comprises 321 residues: Arginine-hydroxylase NDUFAF5, mitochondrial (321 aa).

The N-terminal 25 residues, 1-25, are a transit peptide targeting the mitochondrion; that stretch reads MNVSVKSLRGVSRTWRSFSSRQGMN.

It belongs to the methyltransferase superfamily. In terms of assembly, interacts with NDUFS7.

The protein resides in the mitochondrion inner membrane. Functionally, arginine hydroxylase that mediates hydroxylation of 'Arg-111' of NDUFS7 and is involved in the assembly of mitochondrial NADH:ubiquinone oxidoreductase complex (complex I, MT-ND1) at early stages. May also have methyltransferase activity. In Danio rerio (Zebrafish), this protein is Arginine-hydroxylase NDUFAF5, mitochondrial.